Here is a 473-residue protein sequence, read N- to C-terminus: Ribulose bisphosphate carboxylase large chain (473 aa).

Asparagine 116 and threonine 166 together coordinate substrate. Lysine 168 (proton acceptor) is an active-site residue. Residue lysine 170 participates in substrate binding. Mg(2+)-binding residues include lysine 194, aspartate 196, and glutamate 197. Lysine 194 carries the post-translational modification N6-carboxylysine. The active-site Proton acceptor is the histidine 287. Residues arginine 288, histidine 320, and serine 372 each contribute to the substrate site.

It belongs to the RuBisCO large chain family. Type I subfamily. In terms of assembly, heterohexadecamer of 8 large chains and 8 small chains. Requires Mg(2+) as cofactor.

The enzyme catalyses 2 (2R)-3-phosphoglycerate + 2 H(+) = D-ribulose 1,5-bisphosphate + CO2 + H2O. The catalysed reaction is D-ribulose 1,5-bisphosphate + O2 = 2-phosphoglycolate + (2R)-3-phosphoglycerate + 2 H(+). In terms of biological role, ruBisCO catalyzes two reactions: the carboxylation of D-ribulose 1,5-bisphosphate, the primary event in carbon dioxide fixation, as well as the oxidative fragmentation of the pentose substrate. Both reactions occur simultaneously and in competition at the same active site. This Cupriavidus metallidurans (strain ATCC 43123 / DSM 2839 / NBRC 102507 / CH34) (Ralstonia metallidurans) protein is Ribulose bisphosphate carboxylase large chain.